The sequence spans 994 residues: Glycine dehydrogenase (decarboxylating), mitochondrial (994 aa).

The transit peptide at Met-1 to Tyr-21 directs the protein to the mitochondrion. Lys-742 is subject to N6-(pyridoxal phosphate)lysine.

This sequence belongs to the GcvP family. In terms of assembly, homodimer. The glycine cleavage system is composed of four proteins: P, T, L and H. Requires pyridoxal 5'-phosphate as cofactor.

It is found in the mitochondrion. The enzyme catalyses N(6)-[(R)-lipoyl]-L-lysyl-[glycine-cleavage complex H protein] + glycine + H(+) = N(6)-[(R)-S(8)-aminomethyldihydrolipoyl]-L-lysyl-[glycine-cleavage complex H protein] + CO2. Functionally, the glycine cleavage system catalyzes the degradation of glycine. The P protein binds the alpha-amino group of glycine through its pyridoxal phosphate cofactor; CO(2) is released and the remaining methylamine moiety is then transferred to the lipoamide cofactor of the H protein. The polypeptide is Glycine dehydrogenase (decarboxylating), mitochondrial (gcvP) (Dictyostelium discoideum (Social amoeba)).